A 245-amino-acid polypeptide reads, in one-letter code: Probable 2-phosphosulfolactate phosphatase (245 aa).

Belongs to the ComB family. It depends on Mg(2+) as a cofactor.

It catalyses the reaction (2R)-O-phospho-3-sulfolactate + H2O = (2R)-3-sulfolactate + phosphate. The chain is Probable 2-phosphosulfolactate phosphatase from Trichormus variabilis (strain ATCC 29413 / PCC 7937) (Anabaena variabilis).